The chain runs to 150 residues: Large ribosomal subunit protein uL15 (150 aa).

Polar residues predominate over residues M1–N15. Residues M1–G53 are disordered. The span at G23–A32 shows a compositional bias: gly residues.

The protein belongs to the universal ribosomal protein uL15 family. In terms of assembly, part of the 50S ribosomal subunit.

Functionally, binds to the 23S rRNA. This chain is Large ribosomal subunit protein uL15, found in Flavobacterium johnsoniae (strain ATCC 17061 / DSM 2064 / JCM 8514 / BCRC 14874 / CCUG 350202 / NBRC 14942 / NCIMB 11054 / UW101) (Cytophaga johnsonae).